Consider the following 173-residue polypeptide: Bacterial deubiquitinase-like protein BilC (173 aa).

Positions 103, 105, and 115 each coordinate Zn(2+).

The protein belongs to the M67B family. Requires Zn(2+) as cofactor.

Its function is as follows. Component of the Bil (bacterial ISG15-like) antiviral defense system, composed of BilA, BilB, BilC and BilD. The Bil system specifically conjugates a ubiquitin-like moiety (bilA) to the bacteriophage central tail fiber (CTF, or tip attachment protein J) via reactions involving E1 (bilD) and E2 (bilB). Modifies CTF of phage SECphi27 and SECphi4, which probably interferes with assembly of the phage tail. Also modifies T5 baseplate hub protein pb3 (gene D16), but not gp27 of phage T6 (Bil defends against T6). BilC is a probable metalloprotease that may cleave non-specifically conjugated targets. Bil-encoding bacteria produce mostly defective phage SECphi27, many of which have phage assembly defects, including no tails. SECphi27 phage progeny produced in E.coli with the Bil system inject less DNA into naive host cells, maybe because the phage are less able to adsorb and inject their DNA into host cells. In terms of biological role, expression of the Bil system in E.coli (strain MG1655) confers about 100-fold resistance to phage SECphi27, SECphi18, SECphi6, SECphi4 and T5, but not to SECphi17. When cells expressing the Bil system are infected by phage SECphi27 at low multiplicity of infection (0.03 MOI) the culture survives, at 3.0 MOI the culture collapses at the same time as cells without the Bil system. Functionally, cleaves a ubiquitin-GFP (Ubl-GFP) fusion protein in vivo. The polypeptide is Bacterial deubiquitinase-like protein BilC (Collimonas sp. (strain OK412)).